The chain runs to 874 residues: Probable inorganic carbon transporter subunit DabA (874 aa).

Cysteine 398, aspartate 400, histidine 580, and cysteine 595 together coordinate Zn(2+).

Belongs to the inorganic carbon transporter (TC 9.A.2) DabA family. As to quaternary structure, forms a complex with DabB. It depends on Zn(2+) as a cofactor.

The protein localises to the cell membrane. Part of an energy-coupled inorganic carbon pump. In Bacillus anthracis (strain A0248), this protein is Probable inorganic carbon transporter subunit DabA.